We begin with the raw amino-acid sequence, 125 residues long: Small ribosomal subunit protein uS12m (125 aa).

2 disordered regions span residues 1 to 29 and 105 to 125; these read MPTKNQLIRHGREEKQRTDRTRASDQCPQ and LGIPDRRKGRSKYGAERPKSK. Residues 10-23 show a composition bias toward basic and acidic residues; the sequence is HGREEKQRTDRTRA.

It belongs to the universal ribosomal protein uS12 family.

Its subcellular location is the mitochondrion. In terms of biological role, protein S12 is involved in the translation initiation step. This Oryza sativa subsp. japonica (Rice) protein is Small ribosomal subunit protein uS12m (RPS12).